Consider the following 88-residue polypeptide: UPF0298 protein BA_4142/GBAA_4142/BAS3844 (88 aa).

The protein belongs to the UPF0298 family.

The protein localises to the cytoplasm. The sequence is that of UPF0298 protein BA_4142/GBAA_4142/BAS3844 from Bacillus anthracis.